Consider the following 83-residue polypeptide: Small ribosomal subunit protein bS16 (83 aa).

It belongs to the bacterial ribosomal protein bS16 family.

In Shewanella frigidimarina (strain NCIMB 400), this protein is Small ribosomal subunit protein bS16.